Consider the following 220-residue polypeptide: Charged multivesicular body protein 2a (220 aa).

2 coiled-coil regions span residues 12–53 (EELL…MAKQ) and 198–219 (EATA…NLRR). A disordered region spans residues 196 to 220 (KGEATAALADADADLEERLNNLRRD). The MIT-interacting motif signature appears at 208–218 (ADLEERLNNLR). A compositionally biased stretch (basic and acidic residues) spans 211-220 (EERLNNLRRD).

This sequence belongs to the SNF7 family. Probable core component of the endosomal sorting required for transport complex III (ESCRT-III). ESCRT-III components are thought to multimerize to form a flat lattice on the perimeter membrane of the endosome.

It is found in the late endosome membrane. The protein resides in the cytoplasm. Functionally, probable core component of the endosomal sorting required for transport complex III (ESCRT-III) which is involved in multivesicular bodies (MVBs) formation and sorting of endosomal cargo proteins into MVBs. MVBs contain intraluminal vesicles (ILVs) that are generated by invagination and scission from the limiting membrane of the endosome and mostly are delivered to lysosomes enabling degradation of membrane proteins, such as stimulated growth factor receptors, lysosomal enzymes and lipids. This is Charged multivesicular body protein 2a (chmp2a) from Xenopus laevis (African clawed frog).